A 376-amino-acid polypeptide reads, in one-letter code: UDP-N-acetylglucosamine--N-acetylmuramyl-(pentapeptide) pyrophosphoryl-undecaprenol N-acetylglucosamine transferase (376 aa).

UDP-N-acetyl-alpha-D-glucosamine contacts are provided by residues 12–14 (TAG), N126, R163, S198, and Q296.

The protein belongs to the glycosyltransferase 28 family. MurG subfamily.

The protein localises to the cell membrane. It catalyses the reaction di-trans,octa-cis-undecaprenyl diphospho-N-acetyl-alpha-D-muramoyl-L-alanyl-D-glutamyl-meso-2,6-diaminopimeloyl-D-alanyl-D-alanine + UDP-N-acetyl-alpha-D-glucosamine = di-trans,octa-cis-undecaprenyl diphospho-[N-acetyl-alpha-D-glucosaminyl-(1-&gt;4)]-N-acetyl-alpha-D-muramoyl-L-alanyl-D-glutamyl-meso-2,6-diaminopimeloyl-D-alanyl-D-alanine + UDP + H(+). It functions in the pathway cell wall biogenesis; peptidoglycan biosynthesis. In terms of biological role, cell wall formation. Catalyzes the transfer of a GlcNAc subunit on undecaprenyl-pyrophosphoryl-MurNAc-pentapeptide (lipid intermediate I) to form undecaprenyl-pyrophosphoryl-MurNAc-(pentapeptide)GlcNAc (lipid intermediate II). The chain is UDP-N-acetylglucosamine--N-acetylmuramyl-(pentapeptide) pyrophosphoryl-undecaprenol N-acetylglucosamine transferase from Frankia casuarinae (strain DSM 45818 / CECT 9043 / HFP020203 / CcI3).